The following is a 347-amino-acid chain: Selenide, water dikinase 2 (347 aa).

Selenocysteine 18 is a catalytic residue. Residue selenocysteine 18 is a non-standard amino acid, selenocysteine. ATP-binding positions include lysine 21 and 48 to 50; that span reads TSD. Residue aspartate 51 coordinates Mg(2+). Residues aspartate 68, aspartate 91, and 138 to 140 each bind ATP; that span reads GHT. Aspartate 91 provides a ligand contact to Mg(2+). Aspartate 226 lines the Mg(2+) pocket.

Belongs to the selenophosphate synthase 1 family. Class I subfamily. Homodimer. The cofactor is Mg(2+).

The enzyme catalyses hydrogenselenide + ATP + H2O = selenophosphate + AMP + phosphate + 2 H(+). In terms of biological role, synthesizes selenophosphate from selenide and ATP. The chain is Selenide, water dikinase 2 from Peptoclostridium acidaminophilum (Eubacterium acidaminophilum).